Reading from the N-terminus, the 351-residue chain is Transcriptional activator POG1 (351 aa).

The span at 1-26 (MKQEPHRQSEEKEKPKGPMAVEREQH) shows a compositional bias: basic and acidic residues. The segment at 1-56 (MKQEPHRQSEEKEKPKGPMAVEREQHTSLSSGTTVTASTGDESTNSRPVESSQTEK) is disordered. Residues 27 to 56 (TSLSSGTTVTASTGDESTNSRPVESSQTEK) show a composition bias toward polar residues. A phosphoserine mark is found at serine 152 and serine 168. Disordered regions lie at residues 234-256 (PGMG…TPVM) and 291-351 (QHQL…PPPT). The span at 241-256 (QLPTMSSNSESQTPVM) shows a compositional bias: polar residues. Serine 314 carries the post-translational modification Phosphoserine.

Belongs to the POG1 family. Phosphorylated by CDC28.

The protein resides in the nucleus. In terms of biological role, transcriptional activator which promotes cell cycle recovery with CLN2, after pheromone induced G1 arrest, probably inhibiting the ability of STE20 to activate the pheromone response pathway. Binds the promoters of genes that function in cell cycle regulation, cytoskeletal organization, and spindle assembly. May also be involved in stress-resistance. The protein is Transcriptional activator POG1 (POG1) of Saccharomyces cerevisiae (strain ATCC 204508 / S288c) (Baker's yeast).